A 331-amino-acid polypeptide reads, in one-letter code: UPF0194 membrane protein CKO_02332 (331 aa).

The signal sequence occupies residues 1-15 (MKKPVVIALAVAALA). Positions 142 to 207 (ISANDLENAR…ELDLQDTTLI (66 aa)) form a coiled coil.

The protein belongs to the UPF0194 family.

The protein localises to the periplasm. The polypeptide is UPF0194 membrane protein CKO_02332 (Citrobacter koseri (strain ATCC BAA-895 / CDC 4225-83 / SGSC4696)).